The chain runs to 477 residues: uncharacterized protein (477 aa).

Transmembrane regions (helical) follow at residues 31–51, 60–80, 103–123, 130–150, 177–197, 205–225, 248–268, 291–311, 334–354, 359–379, 384–404, and 433–453; these read LLRL…LLGT, LGVP…VAPF, LWFG…SLIL, MGPA…AGVG, LLYV…GWLL, LIRV…IALW, AWGL…VMVG, VGQT…GFIW, IVAF…LFFA, IGLG…MVVV, GIAL…AVFI, and VVYV…GPLV.

Belongs to the PucC family.

It is found in the cell membrane. This is an uncharacterized protein from Rhodobacter capsulatus (Rhodopseudomonas capsulata).